Consider the following 1746-residue polypeptide: tRNA (32-2'-O)-methyltransferase regulator THADA (1746 aa).

The stretch at 1252-1286 forms a coiled coil; that stretch reads EQALAEIRRIVVELKALQLRLKNTEAANTKLNTNV.

The protein belongs to the THADA family. In terms of assembly, interacts with SERCA. Detected in the larval fat body, salivary glands and wing imaginal disks (at protein level).

The protein resides in the endoplasmic reticulum. Its function is as follows. Together with methyltransferase Trm7-32, methylates the 2'-O-ribose of nucleotides at position 32 of the anticodon loop of substrate tRNAs. Plays a key role in energy homeostasis by regulating the balance between energy storage and heat production. Functions by negatively regulating Ca(2+) signaling pathways that are involved in heat production and maintaining correct lipid storage in the fat body. Regulates Ca(2+) signaling pathways by reducing the activity of the calcium-transporting ATPase SERCA possibly by promoting uncoupling of SERCA ATP hydrolysis from calcium pumping. May also function in the nervous system to control feeding behavior. The polypeptide is tRNA (32-2'-O)-methyltransferase regulator THADA (Drosophila melanogaster (Fruit fly)).